Consider the following 995-residue polypeptide: MAGVQKRKRDLEDQDDNGSEEDDIAFDIANEIALNDSESDANDSDSEVEADYGPNDVQDVIEYSSDEEEGVNNKKKAENKDIKKKKNSKKEIAAFPMLEMSDDENNASGKTQTGDDEDDVNEYFSTNNLEKTKHKKGSFPSFGLSKIVLNNIKRKGFRQPTPIQRKTIPLILQSRDIVGMARTGSGKTAAFILPMVEKLKSHSGKIGARAVILSPSRELAMQTFNVFKDFARGTELRSVLLTGGDSLEEQFGMMMTNPDVIIATPGRFLHLKVEMNLDLKSVEYVVFDEADRLFEMGFQEQLNELLASLPTTRQTLLFSATLPNSLVDFVKAGLVNPVLVRLDAETKVSENLEMLFLSSKNADREANLLYILQEIIKIPLATSEQLQKLQNSNNEADSDSDDENDRQKKRRNFKKEKFRKQKMPAANELPSEKATILFVPTRHHVEYISQLLRDCGYLISYIYGTLDQHARKRQLYNFRAGLTSILVVTDVAARGVDIPMLANVINYTLPGSSKIFVHRVGRTARAGNKGWAYSIVAENELPYLLDLELFLGKKILLTPMYDSLVDVMKKRWIDEGKPEYQFQPPKLSYTKRLVLGSCPRLDVEGLGDLYKNLMSSNFDLQLAKKTAMKAEKLYYRTRTSASPESLKRSKEIISSGWDAQNAFFGKNEEKEKLDFLAKLQNRRNKETVFEFTRNPDDEMAVFMKRRRKQLAPIQRKATERRELLEKERMAGLSHSIEDEILKGDDGETGYTVSEDALKEFEDADQLLEAQENENKKKKKPKSFKDPTFFLSHYAPAGDIQDKQLQITNGFANDAAQAAYDLNSDDKVQVHKQTATVKWDKKRKKYVNTQGIDNKKYIIGESGQKIAASFRSGRFDDWSKARNLKPLKVGSRETSIPSNLLEDPSQGPAANGRTVRGKFKHKQMKAPKMPDKHRDNYYSQKKKVEKALQSGISVKGYNNAPGLRSELKSTEQIRKDRIIAEKKRAKNARPSKKRKF.

Residues 1–120 (MAGVQKRKRD…TQTGDDEDDV (120 aa)) form a disordered region. Composition is skewed to acidic residues over residues 12–25 (EDQD…DDIA) and 37–50 (SESD…EVEA). Residues 71 to 81 (VNNKKKAENKD) are compositionally biased toward basic and acidic residues. The residue at position 101 (Ser101) is a Phosphoserine. The Q motif signature appears at 137-165 (GSFPSFGLSKIVLNNIKRKGFRQPTPIQR). The region spanning 168-340 (IPLILQSRDI…KAGLVNPVLV (173 aa)) is the Helicase ATP-binding domain. An ATP-binding site is contributed by 181 to 188 (ARTGSGKT). Residues 288–291 (DEAD) carry the DEAD box motif. Disordered regions lie at residues 389 to 427 (LQNS…PAAN) and 889 to 973 (GSRE…EQIR). 2 positions are modified to phosphoserine: Ser398 and Ser400. 2 stretches are compositionally biased toward basic residues: residues 407–422 (QKKR…RKQK) and 914–924 (VRGKFKHKQMK). Residues 418 to 568 (FRKQKMPAAN…PMYDSLVDVM (151 aa)) enclose the Helicase C-terminal domain. The segment covering 964–973 (SELKSTEQIR) has biased composition (basic and acidic residues).

The protein belongs to the DEAD box helicase family. DDX54/DBP10 subfamily. In terms of assembly, interacts with RRP1 and associates with pre-ribosomal particles.

It is found in the nucleus. The protein resides in the nucleolus. The catalysed reaction is ATP + H2O = ADP + phosphate + H(+). Its function is as follows. ATP-binding RNA helicase involved in the biogenesis of 60S ribosomal subunits and is required for the normal formation of 25S and 5.8S rRNAs. This Saccharomyces cerevisiae (strain ATCC 204508 / S288c) (Baker's yeast) protein is ATP-dependent RNA helicase DBP10 (DBP10).